The primary structure comprises 413 residues: Putative glutamate--cysteine ligase 2 (413 aa).

A disordered region spans residues 392–413 (GGVCALSTPQGDPLPGWAERLH).

It belongs to the glutamate--cysteine ligase type 2 family. YbdK subfamily.

It carries out the reaction L-cysteine + L-glutamate + ATP = gamma-L-glutamyl-L-cysteine + ADP + phosphate + H(+). Its function is as follows. ATP-dependent carboxylate-amine ligase which exhibits weak glutamate--cysteine ligase activity. In Bordetella bronchiseptica (strain ATCC BAA-588 / NCTC 13252 / RB50) (Alcaligenes bronchisepticus), this protein is Putative glutamate--cysteine ligase 2.